The sequence spans 176 residues: NAD(P)H-quinone oxidoreductase subunit 6, chloroplastic (176 aa).

Transmembrane regions (helical) follow at residues 10-30 (FLLV…VLFT), 32-52 (PIFS…LYIL), 61-81 (AQLL…VMFM), 95-115 (VGDG…ISTI), and 152-172 (FFLP…GAIS).

Belongs to the complex I subunit 6 family. In terms of assembly, NDH is composed of at least 16 different subunits, 5 of which are encoded in the nucleus.

The protein resides in the plastid. The protein localises to the chloroplast thylakoid membrane. The catalysed reaction is a plastoquinone + NADH + (n+1) H(+)(in) = a plastoquinol + NAD(+) + n H(+)(out). The enzyme catalyses a plastoquinone + NADPH + (n+1) H(+)(in) = a plastoquinol + NADP(+) + n H(+)(out). Its function is as follows. NDH shuttles electrons from NAD(P)H:plastoquinone, via FMN and iron-sulfur (Fe-S) centers, to quinones in the photosynthetic chain and possibly in a chloroplast respiratory chain. The immediate electron acceptor for the enzyme in this species is believed to be plastoquinone. Couples the redox reaction to proton translocation, and thus conserves the redox energy in a proton gradient. This is NAD(P)H-quinone oxidoreductase subunit 6, chloroplastic (ndhG) from Aethionema grandiflorum (Persian stone-cress).